We begin with the raw amino-acid sequence, 79 residues long: Moronecidin (79 aa).

The first 22 residues, 1–22, serve as a signal peptide directing secretion; sequence MKCATLFLVLSMVVLMAEPGDA. G44 is subject to Glycine amide. Positions 45 to 79 are disordered; it reads GKAEQDQQDQQYQQEQQEQQAQQYQRFNRERAAFD. The propeptide occupies 47–79; the sequence is AEQDQQDQQYQQEQQEQQAQQYQRFNRERAAFD. Positions 52 to 69 are enriched in low complexity; the sequence is QDQQYQQEQQEQQAQQYQ.

Expressed in mast cells in gill, skin and gut, and in lining blood vessels in the viscera. Also in intestine, spleen, anterior kidney, and blood cells.

The protein resides in the secreted. In terms of biological role, antimicrobial peptide with broad-spectrum activity against Gram-positive and Gram-negative bacteria as well as against a variety of fungi. Rapidly inactivates channel catfish herpesvirus (ED(50)=4 uM) and frog virus 3 (ED(50)=13 uM) over a wide temperature range. Seems to disrupt the membranes by adopting an alpha helical conformation and forming toroidal pores. Has hemolytic activity. This Morone saxatilis (Striped bass) protein is Moronecidin.